Here is a 504-residue protein sequence, read N- to C-terminus: ATP synthase subunit alpha (504 aa).

170–177 (GDRQTGKT) lines the ATP pocket.

The protein belongs to the ATPase alpha/beta chains family. In terms of assembly, F-type ATPases have 2 components, CF(1) - the catalytic core - and CF(0) - the membrane proton channel. CF(1) has five subunits: alpha(3), beta(3), gamma(1), delta(1), epsilon(1). CF(0) has four main subunits: a(1), b(1), b'(1) and c(9-12).

It localises to the cellular thylakoid membrane. The catalysed reaction is ATP + H2O + 4 H(+)(in) = ADP + phosphate + 5 H(+)(out). Its function is as follows. Produces ATP from ADP in the presence of a proton gradient across the membrane. The alpha chain is a regulatory subunit. This is ATP synthase subunit alpha from Prochlorococcus marinus (strain NATL2A).